We begin with the raw amino-acid sequence, 65 residues long: Neuropeptide-like protein 28 (65 aa).

Residues 1-22 (MISTSSILILVFLLACFMATSA) form the signal peptide. Tyr-29, Tyr-39, Tyr-47, and Tyr-55 each carry tyrosine amide. Trp-63 carries the post-translational modification Tryptophan amide.

The protein belongs to the YARP (YGGW-amide related peptide) family.

Its subcellular location is the secreted. Functionally, may have antimicrobial activity. This Caenorhabditis elegans protein is Neuropeptide-like protein 28 (nlp-28).